Reading from the N-terminus, the 326-residue chain is Altered inheritance of mitochondria protein 39, mitochondrial (326 aa).

The N-terminal 40 residues, 1–40 (MQNGYSVSIQHYTAKTTAMKTLKIWRPIFQRWLGKKGPVD), are a transit peptide targeting the mitochondrion. The disordered stretch occupies residues 47–75 (RPPNNKGQDGTHFFTNPQDDNGGDNSGAE). Polar residues predominate over residues 48-65 (PPNNKGQDGTHFFTNPQD). A helical transmembrane segment spans residues 93-115 (AYNLFWVSIAGVLGYSIGYKVIY).

It belongs to the AIM39 family.

Its subcellular location is the mitochondrion membrane. This is Altered inheritance of mitochondria protein 39, mitochondrial (AIM39) from Zygosaccharomyces rouxii (strain ATCC 2623 / CBS 732 / NBRC 1130 / NCYC 568 / NRRL Y-229).